Consider the following 187-residue polypeptide: Ribosome maturation factor RimM (187 aa).

The segment covering 1-17 has biased composition (polar residues); it reads MTSTPSPSTADPNSTND. Positions 1–21 are disordered; that stretch reads MTSTPSPSTADPNSTNDWLPV. In terms of domain architecture, PRC barrel spans 111 to 184; that stretch reads EGEFHLLDLV…WLLLTPPPGL (74 aa).

The protein belongs to the RimM family. As to quaternary structure, binds ribosomal protein uS19.

Its subcellular location is the cytoplasm. An accessory protein needed during the final step in the assembly of 30S ribosomal subunit, possibly for assembly of the head region. Essential for efficient processing of 16S rRNA. May be needed both before and after RbfA during the maturation of 16S rRNA. It has affinity for free ribosomal 30S subunits but not for 70S ribosomes. The protein is Ribosome maturation factor RimM of Synechococcus sp. (strain CC9311).